A 354-amino-acid chain; its full sequence is Protein-glutamate methylesterase/protein-glutamine glutaminase (354 aa).

The Response regulatory domain maps to 6 to 123; the sequence is RVLIVDDSAV…SQSLETLSAA (118 aa). Position 57 is a 4-aspartylphosphate (aspartate 57). The CheB-type methylesterase domain maps to 159 to 351; it reads ARTTHQLLAV…GDLLKQLQTR (193 aa). Catalysis depends on residues serine 171, histidine 197, and aspartate 293.

The protein belongs to the CheB family. Phosphorylated by CheA. Phosphorylation of the N-terminal regulatory domain activates the methylesterase activity.

It localises to the cytoplasm. It catalyses the reaction [protein]-L-glutamate 5-O-methyl ester + H2O = L-glutamyl-[protein] + methanol + H(+). The catalysed reaction is L-glutaminyl-[protein] + H2O = L-glutamyl-[protein] + NH4(+). Involved in chemotaxis. Part of a chemotaxis signal transduction system that modulates chemotaxis in response to various stimuli. Catalyzes the demethylation of specific methylglutamate residues introduced into the chemoreceptors (methyl-accepting chemotaxis proteins or MCP) by CheR. Also mediates the irreversible deamidation of specific glutamine residues to glutamic acid. The protein is Protein-glutamate methylesterase/protein-glutamine glutaminase of Bdellovibrio bacteriovorus (strain ATCC 15356 / DSM 50701 / NCIMB 9529 / HD100).